The sequence spans 298 residues: GTP cyclohydrolase FolE2 (298 aa).

It belongs to the GTP cyclohydrolase IV family.

The enzyme catalyses GTP + H2O = 7,8-dihydroneopterin 3'-triphosphate + formate + H(+). It participates in cofactor biosynthesis; 7,8-dihydroneopterin triphosphate biosynthesis; 7,8-dihydroneopterin triphosphate from GTP: step 1/1. Functionally, converts GTP to 7,8-dihydroneopterin triphosphate. This Xylella fastidiosa (strain 9a5c) protein is GTP cyclohydrolase FolE2.